Consider the following 706-residue polypeptide: Axin-related protein (706 aa).

Positions 72–191 (SLNLLLDDQD…LQSDICKEYA (120 aa)) constitute an RGS domain. Disordered stretches follow at residues 278–298 (MTDG…REIH), 400–482 (TPAN…GTSA), and 585–605 (STTL…GFST). Polar residues predominate over residues 402-412 (ANLSPRSQSPF). The segment covering 453 to 462 (RSSVSSQLPR) has biased composition (low complexity). One can recognise a DIX domain in the interval 624 to 706 (GQGLAIVYYF…KIICKVERAC (83 aa)).

As to quaternary structure, interacts with dvl2/dsh via DIX domains in both proteins. Forms a complex with ctnnb1/beta-catenin and gsk3b. Also forms heterodimers with mouse Axin1.

The protein resides in the cytoplasm. The protein localises to the cytoplasmic vesicle. Functionally, regulates the wnt signaling pathway by interacting with dvl2/dsh, which displaces gsk3b from the axnr-gsk3b complex and thus prevents degradation of ctnnb1/beta-catenin. The protein is Axin-related protein of Xenopus laevis (African clawed frog).